Consider the following 218-residue polypeptide: Mediator of RNA polymerase II transcription subunit 20 (218 aa).

Belongs to the Mediator complex subunit 20 family. Component of the Mediator complex.

It localises to the nucleus. In terms of biological role, component of the Mediator complex, a coactivator involved in the regulated transcription of nearly all RNA polymerase II-dependent genes. Mediator functions as a bridge to convey information from gene-specific regulatory proteins to the basal RNA polymerase II transcription machinery. Mediator is recruited to promoters by direct interactions with regulatory proteins and serves as a scaffold for the assembly of a functional preinitiation complex with RNA polymerase II and the general transcription factors. This Anopheles gambiae (African malaria mosquito) protein is Mediator of RNA polymerase II transcription subunit 20 (MED20).